Consider the following 114-residue polypeptide: Hydrogenase maturation factor HypA (114 aa).

His-2 provides a ligand contact to Ni(2+). Residues Cys-73, Cys-76, Cys-90, and Cys-93 each contribute to the Zn(2+) site.

It belongs to the HypA/HybF family.

Functionally, involved in the maturation of [NiFe] hydrogenases. Required for nickel insertion into the metal center of the hydrogenase. In Klebsiella pneumoniae subsp. pneumoniae (strain ATCC 700721 / MGH 78578), this protein is Hydrogenase maturation factor HypA.